We begin with the raw amino-acid sequence, 166 residues long: Phospholipase A2 inhibitor clone 06/08 (166 aa).

A signal peptide spans 1–19 (MRLILLSGLLLLGIFLANG). The region spanning 46–161 (LRGAFLTVYK…CDDNLLVVCE (116 aa)) is the C-type lectin domain. Residues Asn61 and Asn122 are each glycosylated (N-linked (GlcNAc...) asparagine). Intrachain disulfides connect Cys83-Cys160 and Cys138-Cys152.

It belongs to the alpha-type phospholipase A2 inhibitor family. As to quaternary structure, homotrimer; non-covalently linked. As to expression, expressed by the liver.

The protein localises to the secreted. Its function is as follows. This phospholipase A2 inhibitor binds directly phospholipase A2 in the presence or absence of calcium. The sequence is that of Phospholipase A2 inhibitor clone 06/08 from Bothrops neuwiedi (Neuwied's lancehead).